The primary structure comprises 510 residues: Holliday junction branch migration ATPase PINA (510 aa).

As to quaternary structure, homohexamer. Interacts with Holliday junction resolvase Hjc, interacts with helicase Hjm (Hel308).

The catalysed reaction is ATP + H2O = ADP + phosphate + H(+). In terms of biological role, important for growth at low temperatures (less than 65 degrees Celsius in this organism). Promotes Holliday junction (HJ) branch migration and unwinds Y-shaped DNA (but not replication forks or dsDNA) in an ATP hydrolysis-dependent manner. Stimulates cleavage by HJ resolvase Hjc. Hjc, Hjm (Hel308) and PINA coordinate HJ migration and cleavage of replication forks in a coordinated way. Probably acts as an ATP-dependent pump that pulls DNA through the hexamer. In Sulfolobus acidocaldarius (strain ATCC 33909 / DSM 639 / JCM 8929 / NBRC 15157 / NCIMB 11770), this protein is Holliday junction branch migration ATPase PINA.